A 1154-amino-acid chain; its full sequence is Chromosome partition protein Smc (1154 aa).

Position 32-39 (32-39 (PNGCGKSN)) interacts with ATP. 3 coiled-coil regions span residues 170–215 (VAGL…ARQA), 282–505 (LREA…LNGE), and 627–993 (AARR…EARE).

This sequence belongs to the SMC family. In terms of assembly, homodimer.

It is found in the cytoplasm. In terms of biological role, required for chromosome condensation and partitioning. The sequence is that of Chromosome partition protein Smc from Rhodopseudomonas palustris (strain ATCC BAA-98 / CGA009).